A 255-amino-acid chain; its full sequence is Imidazole glycerol phosphate synthase subunit HisF (255 aa).

Residues D11 and D130 contribute to the active site.

It belongs to the HisA/HisF family. As to quaternary structure, heterodimer of HisH and HisF.

The protein localises to the cytoplasm. It catalyses the reaction 5-[(5-phospho-1-deoxy-D-ribulos-1-ylimino)methylamino]-1-(5-phospho-beta-D-ribosyl)imidazole-4-carboxamide + L-glutamine = D-erythro-1-(imidazol-4-yl)glycerol 3-phosphate + 5-amino-1-(5-phospho-beta-D-ribosyl)imidazole-4-carboxamide + L-glutamate + H(+). It participates in amino-acid biosynthesis; L-histidine biosynthesis; L-histidine from 5-phospho-alpha-D-ribose 1-diphosphate: step 5/9. In terms of biological role, IGPS catalyzes the conversion of PRFAR and glutamine to IGP, AICAR and glutamate. The HisF subunit catalyzes the cyclization activity that produces IGP and AICAR from PRFAR using the ammonia provided by the HisH subunit. In Rhodopseudomonas palustris (strain ATCC BAA-98 / CGA009), this protein is Imidazole glycerol phosphate synthase subunit HisF.